The primary structure comprises 249 residues: Large ribosomal subunit protein uL16m (249 aa).

The protein belongs to the universal ribosomal protein uL16 family. Component of the mitochondrial large ribosomal subunit (mt-LSU). Mature N.crassa 74S mitochondrial ribosomes consist of a small (37S) and a large (54S) subunit. The 37S small subunit contains a 16S ribosomal RNA (16S mt-rRNA) and 32 different proteins. The 54S large subunit contains a 23S rRNA (23S mt-rRNA) and 42 different proteins.

Its subcellular location is the mitochondrion. Its function is as follows. Component of the mitochondrial ribosome (mitoribosome), a dedicated translation machinery responsible for the synthesis of mitochondrial genome-encoded proteins, including at least some of the essential transmembrane subunits of the mitochondrial respiratory chain. The mitoribosomes are attached to the mitochondrial inner membrane and translation products are cotranslationally integrated into the membrane. In Neurospora crassa (strain ATCC 24698 / 74-OR23-1A / CBS 708.71 / DSM 1257 / FGSC 987), this protein is Large ribosomal subunit protein uL16m (mrpl16).